A 113-amino-acid chain; its full sequence is CRISPR-associated endoribonuclease Cas2 2 (113 aa).

Residue Asp-32 participates in Mg(2+) binding.

The protein belongs to the CRISPR-associated endoribonuclease Cas2 protein family. Homodimer, forms a heterotetramer with a Cas1 homodimer. Mg(2+) serves as cofactor.

CRISPR (clustered regularly interspaced short palindromic repeat), is an adaptive immune system that provides protection against mobile genetic elements (viruses, transposable elements and conjugative plasmids). CRISPR clusters contain sequences complementary to antecedent mobile elements and target invading nucleic acids. CRISPR clusters are transcribed and processed into CRISPR RNA (crRNA). Functions as a ssRNA-specific endoribonuclease. Involved in the integration of spacer DNA into the CRISPR cassette. This Nitrosomonas europaea (strain ATCC 19718 / CIP 103999 / KCTC 2705 / NBRC 14298) protein is CRISPR-associated endoribonuclease Cas2 2 (cas22).